Consider the following 244-residue polypeptide: Aspartate/glutamate leucyltransferase (244 aa).

This sequence belongs to the R-transferase family. Bpt subfamily.

It is found in the cytoplasm. The catalysed reaction is N-terminal L-glutamyl-[protein] + L-leucyl-tRNA(Leu) = N-terminal L-leucyl-L-glutamyl-[protein] + tRNA(Leu) + H(+). The enzyme catalyses N-terminal L-aspartyl-[protein] + L-leucyl-tRNA(Leu) = N-terminal L-leucyl-L-aspartyl-[protein] + tRNA(Leu) + H(+). Functions in the N-end rule pathway of protein degradation where it conjugates Leu from its aminoacyl-tRNA to the N-termini of proteins containing an N-terminal aspartate or glutamate. The chain is Aspartate/glutamate leucyltransferase from Bordetella parapertussis (strain 12822 / ATCC BAA-587 / NCTC 13253).